A 329-amino-acid chain; its full sequence is Glycerol-3-phosphate dehydrogenase [NAD(P)+] (329 aa).

Residues W15, H35, and K107 each coordinate NADPH. 3 residues coordinate sn-glycerol 3-phosphate: K107, G135, and S137. A139 contacts NADPH. Sn-glycerol 3-phosphate-binding residues include K190, D243, S253, R254, and N255. The active-site Proton acceptor is the K190. R254 lines the NADPH pocket. The NADPH site is built by L276 and E278.

Belongs to the NAD-dependent glycerol-3-phosphate dehydrogenase family.

The protein resides in the cytoplasm. It carries out the reaction sn-glycerol 3-phosphate + NAD(+) = dihydroxyacetone phosphate + NADH + H(+). The catalysed reaction is sn-glycerol 3-phosphate + NADP(+) = dihydroxyacetone phosphate + NADPH + H(+). It participates in membrane lipid metabolism; glycerophospholipid metabolism. In terms of biological role, catalyzes the reduction of the glycolytic intermediate dihydroxyacetone phosphate (DHAP) to sn-glycerol 3-phosphate (G3P), the key precursor for phospholipid synthesis. The protein is Glycerol-3-phosphate dehydrogenase [NAD(P)+] of Rhodopseudomonas palustris (strain TIE-1).